Consider the following 200-residue polypeptide: 3-isopropylmalate dehydratase small subunit (200 aa).

The protein belongs to the LeuD family. LeuD type 1 subfamily. Heterodimer of LeuC and LeuD.

It carries out the reaction (2R,3S)-3-isopropylmalate = (2S)-2-isopropylmalate. The protein operates within amino-acid biosynthesis; L-leucine biosynthesis; L-leucine from 3-methyl-2-oxobutanoate: step 2/4. Catalyzes the isomerization between 2-isopropylmalate and 3-isopropylmalate, via the formation of 2-isopropylmaleate. This Methylobacterium radiotolerans (strain ATCC 27329 / DSM 1819 / JCM 2831 / NBRC 15690 / NCIMB 10815 / 0-1) protein is 3-isopropylmalate dehydratase small subunit.